Here is a 284-residue protein sequence, read N- to C-terminus: 2-dehydro-3-deoxyphosphooctonate aldolase (284 aa).

It belongs to the KdsA family.

It localises to the cytoplasm. It catalyses the reaction D-arabinose 5-phosphate + phosphoenolpyruvate + H2O = 3-deoxy-alpha-D-manno-2-octulosonate-8-phosphate + phosphate. It participates in carbohydrate biosynthesis; 3-deoxy-D-manno-octulosonate biosynthesis; 3-deoxy-D-manno-octulosonate from D-ribulose 5-phosphate: step 2/3. It functions in the pathway bacterial outer membrane biogenesis; lipopolysaccharide biosynthesis. In Actinobacillus pleuropneumoniae serotype 7 (strain AP76), this protein is 2-dehydro-3-deoxyphosphooctonate aldolase.